The chain runs to 621 residues: MALLQIAEPGQSPQPHQRRLAVGIDLGTTNSLVAALRSGLSEPLADAEGRVILPSAVRYHADRVEVGESAKLAASSDPLNTVLSVKRLMGRGLSDVKQLGDQLPYRFVGGESHMPFIDTVQGPKSPVEVSADILKVLRQRAEATLGGELVGAVITVPAYFDDAQRQATKDAAKLAGLNVLRLLNEPTAAAVAYGLDQHAEGLVAIYDLGGGTFDISILRLTGGVFEVLATGGDSALGGDDFDHAIAGWIIESASLSADLDPGAQRSLLQAACAAKEALTDSDSVEVAYGDWKAQLTREAFDALIEPMVARSLKACRRAVRDSGVELEDVHAVVMVGGSTRVPRVREAVAEAFGRQPLTEIDPDQVVAIGAAIQADTLAGNKRDGGELLLLDVIPLSLGLETMGGLMEKVIPRNTTIPVARAQDFTTYKDGQSAMAIHVLQGERELISDCRSLARFELRGIPAMVAGAAKIRVTFQVDADGLLSVSARELGSGVEASIQVKPSYGLTDGEIAKMLKDSFQHANDDKVARVLREQQVDAQRLIEAVQGALEADGERLLDAEERMVIDLQVQELTELMKGTDGYAIEQQTKRLSQVTDAFAARRMDQTVKAALSGRNLNEIEDI.

Belongs to the heat shock protein 70 family.

Chaperone involved in the maturation of iron-sulfur cluster-containing proteins. Has a low intrinsic ATPase activity which is markedly stimulated by HscB. The sequence is that of Chaperone protein HscA homolog from Pseudomonas fluorescens (strain Pf0-1).